The following is a 412-amino-acid chain: Multifunctional CCA protein (412 aa).

2 residues coordinate ATP: Gly-8 and Arg-11. CTP-binding residues include Gly-8 and Arg-11. Positions 21 and 23 each coordinate Mg(2+). Residues Arg-91, Arg-137, and Arg-140 each contribute to the ATP site. Residues Arg-91, Arg-137, and Arg-140 each coordinate CTP. One can recognise an HD domain in the interval 226 to 327 (TGIHTMMVID…VTLFEKTDAL (102 aa)).

The protein belongs to the tRNA nucleotidyltransferase/poly(A) polymerase family. Bacterial CCA-adding enzyme type 1 subfamily. As to quaternary structure, monomer. Can also form homodimers and oligomers. It depends on Mg(2+) as a cofactor. Ni(2+) is required as a cofactor.

It carries out the reaction a tRNA precursor + 2 CTP + ATP = a tRNA with a 3' CCA end + 3 diphosphate. It catalyses the reaction a tRNA with a 3' CCA end + 2 CTP + ATP = a tRNA with a 3' CCACCA end + 3 diphosphate. Functionally, catalyzes the addition and repair of the essential 3'-terminal CCA sequence in tRNAs without using a nucleic acid template. Adds these three nucleotides in the order of C, C, and A to the tRNA nucleotide-73, using CTP and ATP as substrates and producing inorganic pyrophosphate. tRNA 3'-terminal CCA addition is required both for tRNA processing and repair. Also involved in tRNA surveillance by mediating tandem CCA addition to generate a CCACCA at the 3' terminus of unstable tRNAs. While stable tRNAs receive only 3'-terminal CCA, unstable tRNAs are marked with CCACCA and rapidly degraded. The polypeptide is Multifunctional CCA protein (Dechloromonas aromatica (strain RCB)).